The chain runs to 343 residues: Ribosomal RNA small subunit methyltransferase C (343 aa).

The protein belongs to the methyltransferase superfamily. RsmC family. As to quaternary structure, monomer.

Its subcellular location is the cytoplasm. It carries out the reaction guanosine(1207) in 16S rRNA + S-adenosyl-L-methionine = N(2)-methylguanosine(1207) in 16S rRNA + S-adenosyl-L-homocysteine + H(+). In terms of biological role, specifically methylates the guanine in position 1207 of 16S rRNA in the 30S particle. The chain is Ribosomal RNA small subunit methyltransferase C from Escherichia coli (strain K12 / DH10B).